Consider the following 654-residue polypeptide: WD repeat-containing protein 70 (654 aa).

Disordered stretches follow at residues 1 to 26 and 43 to 175; these read MERSGPSEVTGSDASGPDPQLAVTMG and FEQT…DSHE. Over residues 45–78 the composition is skewed to basic and acidic residues; it reads QTRRTAVERSRKTLEAREKEEEMNREKELRRQNE. The span at 99 to 111 shows a compositional bias: low complexity; that stretch reads RDTSSSESEQSSD. A compositionally biased stretch (acidic residues) spans 147–164; it reads NEEEEEAEEEEEEEEEEE. A compositionally biased stretch (basic and acidic residues) spans 165-175; sequence NPVHKIPDSHE. 7 WD repeats span residues 180-219, 227-268, 281-321, 330-369, 376-415, 421-466, and 469-508; these read HGTKTVSALGLDPSGARLVTGGYDYDVKFWDFAGMDASFK, CECH…ECIK, GHTA…KQKS, GKKVIPTTCTYSRDGNLIAAACQNGSIQIWDRNLTVHPKF, DSGTDTSCVTFSYDGNVLASRGGDDSLKLWDIRQFNKPLF, PTMF…RVYE, and ITDASVVRCLWHPKLNQIMVGTGNGLAKVYYDPNKSQRGA. Lysine 296 is covalently cross-linked (Glycyl lysine isopeptide (Lys-Gly) (interchain with G-Cter in SUMO2)). Lysine 452 bears the N6-acetyllysine mark. Residues 540–565 show a composition bias toward basic and acidic residues; it reads REPRQRSTRKQLEKDRLDPLKSHKPE. Residues 540-579 are disordered; the sequence is REPRQRSTRKQLEKDRLDPLKSHKPEPPVAGPGRGGRVGT. Residue threonine 579 is modified to Phosphothreonine. Glycyl lysine isopeptide (Lys-Gly) (interchain with G-Cter in SUMO2) cross-links involve residues lysine 590 and lysine 596. Phosphoserine is present on residues serine 621 and serine 638. Positions 630–654 are disordered; sequence KTMFAQVESDDEEAKNEPEWKKRKI. Residues 644 to 654 show a composition bias toward basic and acidic residues; sequence KNEPEWKKRKI.

This sequence belongs to the WD repeat GAD-1 family.

The protein is WD repeat-containing protein 70 (WDR70) of Homo sapiens (Human).